Here is a 425-residue protein sequence, read N- to C-terminus: ATP-dependent RNA helicase RhlB (425 aa).

A Q motif motif is present at residues 9 to 37 (TRFADLALHPKIQQAISSAGFEYCTPIQA). Residues 40–218 (LPVALSNRDV…YEHMNAPTKL (179 aa)) form the Helicase ATP-binding domain. Residue 53 to 60 (AQTGTGKT) participates in ATP binding. The DEAD box signature appears at 164 to 167 (DEAD). In terms of domain architecture, Helicase C-terminal spans 242–389 (KFPLLLTLIE…VTKYDGDALL (148 aa)). The segment at 391–425 (DLRRPRPIQRRRRHNSGGGKGKPRGRRSGPPRNAS) is disordered. Over residues 395–419 (PRPIQRRRRHNSGGGKGKPRGRRSG) the composition is skewed to basic residues.

Belongs to the DEAD box helicase family. RhlB subfamily. In terms of assembly, component of the RNA degradosome, which is a multiprotein complex involved in RNA processing and mRNA degradation.

It localises to the cytoplasm. The enzyme catalyses ATP + H2O = ADP + phosphate + H(+). DEAD-box RNA helicase involved in RNA degradation. Has RNA-dependent ATPase activity and unwinds double-stranded RNA. The sequence is that of ATP-dependent RNA helicase RhlB from Idiomarina loihiensis (strain ATCC BAA-735 / DSM 15497 / L2-TR).